The sequence spans 449 residues: Pentalenene oxygenase (449 aa).

The helical transmembrane segment at 251-273 threads the bilayer; sequence VITVMAAGTETVAGTLTWIFHLL. C393 serves as a coordination point for heme.

Belongs to the cytochrome P450 family.

It localises to the membrane. It carries out the reaction pentalenene + 4 reduced [2Fe-2S]-[ferredoxin] + 2 O2 + 4 H(+) = pentalen-13-al + 4 oxidized [2Fe-2S]-[ferredoxin] + 3 H2O. It participates in antibiotic biosynthesis; neopentalenolactone biosynthesis. Catalyzes the conversion of pentalenene to pentalen-13-al by stepwise oxidation via pentalen-13-ol, a precursor of neopentalenolactone antibiotic. In Streptomyces avermitilis (strain ATCC 31267 / DSM 46492 / JCM 5070 / NBRC 14893 / NCIMB 12804 / NRRL 8165 / MA-4680), this protein is Pentalenene oxygenase (ptlI).